The following is a 757-amino-acid chain: RNA-directed RNA polymerase catalytic subunit (757 aa).

The segment at 52 to 78 is disordered; that stretch reads RGKWTTNTETGAPQLNPIDGPLPEDNE. Residues 55 to 64 show a composition bias toward polar residues; it reads WTTNTETGAP. 2 consecutive short sequence motifs (nuclear localization signal) follow at residues 187 to 195 and 203 to 216; these read RKRRVRDNM and RTIG…NKRS. Residues 249 to 256 are promoter-binding site; the sequence is RGFVYFVE. In terms of domain architecture, RdRp catalytic spans 286–483; the sequence is VRKMMTNSQD…GINMSKKKSY (198 aa).

The protein belongs to the influenza viruses polymerase PB1 family. Influenza RNA polymerase is composed of three subunits: PB1, PB2 and PA. Interacts (via N-terminus) with PA (via C-terminus). Interacts (via C-terminus) with PB2 (via N-terminus); this interaction is essential for transcription initiation. Interacts (via C-terminus) with human PKP2 (via N-terminus); the interaction competitively inhibits the interaction between the RNA polymerase subunits PB1 and PB2. In terms of processing, phosphorylated by host PRKCA.

It is found in the host nucleus. Its subcellular location is the host cytoplasm. The catalysed reaction is RNA(n) + a ribonucleoside 5'-triphosphate = RNA(n+1) + diphosphate. Its function is as follows. RNA-dependent RNA polymerase which is responsible for replication and transcription of virus RNA segments. The transcription of viral mRNAs occurs by a unique mechanism called cap-snatching. 5' methylated caps of cellular mRNAs are cleaved after 10-13 nucleotides by PA. In turn, these short capped RNAs are used as primers by PB1 for transcription of viral mRNAs. During virus replication, PB1 initiates RNA synthesis and copy vRNA into complementary RNA (cRNA) which in turn serves as a template for the production of more vRNAs. The sequence is that of RNA-directed RNA polymerase catalytic subunit from Influenza A virus (strain A/Swine/Tennessee/26/1977 H1N1).